The following is a 313-amino-acid chain: tRNA dimethylallyltransferase (313 aa).

11–18 provides a ligand contact to ATP; sequence GPTACGKT. Position 13-18 (13-18) interacts with substrate; that stretch reads TACGKT. Interaction with substrate tRNA regions lie at residues 36–39, 160–164, and 243–248; these read DSAL, QRIGR, and RCVGYR.

Belongs to the IPP transferase family. Monomer. Mg(2+) is required as a cofactor.

It carries out the reaction adenosine(37) in tRNA + dimethylallyl diphosphate = N(6)-dimethylallyladenosine(37) in tRNA + diphosphate. Catalyzes the transfer of a dimethylallyl group onto the adenine at position 37 in tRNAs that read codons beginning with uridine, leading to the formation of N6-(dimethylallyl)adenosine (i(6)A). This Neisseria gonorrhoeae (strain NCCP11945) protein is tRNA dimethylallyltransferase.